The primary structure comprises 154 residues: Prefoldin subunit alpha (154 aa).

The interval 123 to 154 (EAEQLEQQAQQAQQQMMQQQMQAQQQPQDGEQ) is disordered. A compositionally biased stretch (low complexity) spans 127 to 154 (LEQQAQQAQQQMMQQQMQAQQQPQDGEQ).

This sequence belongs to the prefoldin alpha subunit family. As to quaternary structure, heterohexamer of two alpha and four beta subunits.

It is found in the cytoplasm. In terms of biological role, molecular chaperone capable of stabilizing a range of proteins. Seems to fulfill an ATP-independent, HSP70-like function in archaeal de novo protein folding. The protein is Prefoldin subunit alpha of Halobacterium salinarum (strain ATCC 29341 / DSM 671 / R1).